A 159-amino-acid chain; its full sequence is Cytochrome c-type biogenesis protein CcmE (159 aa).

The Cytoplasmic segment spans residues 1-8 (MNPRRKKR). The chain crosses the membrane as a helical; Signal-anchor for type II membrane protein span at residues 9-29 (LLVIVAVLFGIGASIGLVLYA). The Periplasmic segment spans residues 30–159 (LQENINLFYT…KPKYNLDSGN (130 aa)). H130 and Y134 together coordinate heme.

Belongs to the CcmE/CycJ family.

It localises to the cell inner membrane. In terms of biological role, heme chaperone required for the biogenesis of c-type cytochromes. Transiently binds heme delivered by CcmC and transfers the heme to apo-cytochromes in a process facilitated by CcmF and CcmH. In Pseudoalteromonas translucida (strain TAC 125), this protein is Cytochrome c-type biogenesis protein CcmE.